The sequence spans 883 residues: Ankyrin repeat and SAM domain-containing protein 6 (883 aa).

ANK repeat units follow at residues 8-37 (PGLQ…DPVA), 68-97 (AGNS…SVNS), 101-130 (YGWS…DVNA), 134-163 (LGAS…IVDH), 181-210 (LGIT…DPNH), 215-244 (VGWS…NPDH), 282-312 (KRRP…HVNL), 316-345 (DGAT…DMDK), 350-379 (HGWT…DVAL), and 383-414 (NGYT…QVNK). Residues 30 to 50 (EPGADPVAGPEAGAEPAGPEA) are disordered. 4 disordered regions span residues 414 to 439 (KDRG…IPVL), 490 to 522 (MRAP…RREK), 566 to 773 (SHTC…ITDE), and 852 to 883 (SFES…SSRR). Basic and acidic residues predominate over residues 566 to 576 (SHTCHNGKADP). Over residues 607 to 630 (PSISRSPASPASSGSFNHSPHSSG) the composition is skewed to low complexity. The segment covering 631 to 640 (GASGIGGMSR) has biased composition (gly residues). The residue at position 649 (serine 649) is a Phosphoserine. A compositionally biased stretch (polar residues) spans 649–661 (SGGSVDSVLSQIA). Low complexity-rich tracts occupy residues 687–711 (SSSP…PSSS) and 720–737 (PPSG…TLTP). Phosphoserine occurs at positions 732 and 740. Low complexity predominate over residues 748–768 (SSVSSSSSHRQSKSSGGSSSG). Residues 771–834 (TDEDELTGIL…LAAISELNAG (64 aa)) form the SAM domain. The segment covering 852 to 862 (SFESSASNTRA) has biased composition (polar residues). The span at 874–883 (RPEETVSSRR) shows a compositional bias: basic and acidic residues.

As to quaternary structure, homooligomer. Interacts with NEK8. Central component of a complex containing at least ANKS6, INVS, NEK8 and NPHP3. ANKS6 may organize complex assembly by linking INVS and NPHP3 to NEK8 and INVS may target the complex to the proximal ciliary axoneme. Interacts (via SAM domain) with BICC1 (via KH domains) in an RNA-dependent manner. Interacts (via SAM domain) with ANKS3 (via SAM domain). Hydroxylated at Asn-129, most probably by HIF1AN. This hydroxylation results in decreased NEK8-binding. In terms of tissue distribution, expressed in kidney (at protein level).

It localises to the cell projection. The protein localises to the cilium. The protein resides in the cytoplasm. Functionally, required for renal function. The chain is Ankyrin repeat and SAM domain-containing protein 6 (Anks6) from Mus musculus (Mouse).